The primary structure comprises 351 residues: Aromatic amino acid aminotransferase (351 aa).

Lysine 215 carries the post-translational modification N6-(pyridoxal phosphate)lysine.

Belongs to the class-II pyridoxal-phosphate-dependent aminotransferase family. In terms of assembly, homodimer. It depends on pyridoxal 5'-phosphate as a cofactor.

It carries out the reaction an aromatic L-alpha-amino acid + 2-oxoglutarate = an aromatic oxo-acid + L-glutamate. In terms of biological role, aminotransferase that catalyzes the conversion of aromatic amino acids and 2-oxoglutarate into corresponding aromatic oxo acids and L-glutamate. The protein is Aromatic amino acid aminotransferase of Mycolicibacterium vanbaalenii (strain DSM 7251 / JCM 13017 / BCRC 16820 / KCTC 9966 / NRRL B-24157 / PYR-1) (Mycobacterium vanbaalenii).